The chain runs to 215 residues: 3-isopropylmalate dehydratase small subunit (215 aa).

This sequence belongs to the LeuD family. LeuD type 1 subfamily. In terms of assembly, heterodimer of LeuC and LeuD.

The catalysed reaction is (2R,3S)-3-isopropylmalate = (2S)-2-isopropylmalate. Its pathway is amino-acid biosynthesis; L-leucine biosynthesis; L-leucine from 3-methyl-2-oxobutanoate: step 2/4. Catalyzes the isomerization between 2-isopropylmalate and 3-isopropylmalate, via the formation of 2-isopropylmaleate. The protein is 3-isopropylmalate dehydratase small subunit of Chromohalobacter salexigens (strain ATCC BAA-138 / DSM 3043 / CIP 106854 / NCIMB 13768 / 1H11).